Here is a 91-residue protein sequence, read N- to C-terminus: RING finger protein Z (91 aa).

Gly2 is lipidated: N-myristoyl glycine; by host. An RING-type; atypical zinc finger spans residues 35 to 71 (CKCCWFQDKNLVECSDHYLCLKCISSMLKRGKNCEIC). Residues 85-88 (PTAP) carry the PTAP/PSAP motif motif.

The protein belongs to the arenaviridae Z protein family. In terms of assembly, interacts with protein NP; this interaction probably directs the encapsidated genome to budding sites. Interacts (via RING domain) with polymerase L; this interaction inhibits viral transcription and replication, Z partially blocks the product exit tunnel for the releasing nascent RNA product. Interacts with the glycoprotein complex; this interaction plays a role in virion budding. Interacts with host eIF4E; this interaction results in eIF4E reduced affinity for its substrate, the 5'-m7 G cap structure. Interacts (via late-budding domain) with host TSG101; this interaction is essential for budding and release of viral particles. Interacts with host RPLP0; this interaction may serve to load ribosome-like particles inside the virion. Interacts with host PML; this interaction induces PML bodies redistribution in the cytoplasm upon viral infection. Myristoylation is required for the role of RING finger protein Z in assembly and budding.

The protein localises to the virion. It localises to the host cytoplasm. Its subcellular location is the host perinuclear region. It is found in the host cell membrane. Its function is as follows. Plays a crucial role in virion assembly and budding. Expressed late in the virus life cycle, it acts as an inhibitor of viral transcription and RNA synthesis by interacting with the viral polymerase L. Presumably recruits the NP encapsidated genome to cellular membranes at budding sites via direct interaction with NP. Plays critical roles in the final steps of viral release by interacting with host TSG101, a member of the vacuolar protein-sorting pathway and using other cellular host proteins involved in vesicle formation pathway. The budding of the virus progeny occurs after association of protein Z with the viral glycoprotein complex SSP-GP1-GP2 at the cell periphery, step that requires myristoylation of protein Z. Also selectively represses protein production by associating with host eIF4E. In cell-based minigenome assay, has an inhibitory effect on the ribonucleoprotein machinery (vRNP), which is responsible for the replication and transcription of the viral genome. This is RING finger protein Z from Latino mammarenavirus (isolate Rat/Bolivia/MARU 1924/1965) (LATV).